The chain runs to 1130 residues: BTB/POZ domain-containing protein 7 (1130 aa).

The span at Met1–His10 shows a compositional bias: polar residues. Positions Met1–Gln24 are disordered. Gly2 carries the N-myristoyl glycine lipid modification. BTB domains lie at Thr142 to Asp211 and Tyr247 to Val341. Residues Tyr413–Ile479 form the BACK domain. Residue Ser722 is modified to Phosphoserine. 2 disordered regions span residues Ser898–Val1050 and Phe1062–Leu1130. Composition is skewed to basic and acidic residues over residues Pro923–Gln935 and Lys996–Tyr1005. Ser1008 is subject to Phosphoserine. Over residues Gly1063–Cys1075 the composition is skewed to polar residues. 2 stretches are compositionally biased toward basic and acidic residues: residues Leu1080–Asp1090 and Arg1101–Ser1112.

In terms of tissue distribution, specifically expressed in embryonic epithelia.

The protein resides in the nucleus. Acts as a mediator of epithelial dynamics and organ branching by promoting cleft progression. Induced following accumulation of fibronectin in forming clefts, leading to local expression of the cell-scattering SNAIL2 and suppression of E-cadherin levels, thereby altering cell morphology and reducing cell-cell adhesion. This stimulates cell separation at the base of forming clefts by local, dynamic intercellular gap formation and promotes cleft progression. This chain is BTB/POZ domain-containing protein 7 (Btbd7), found in Mus musculus (Mouse).